Consider the following 268-residue polypeptide: Mediator of RNA polymerase II transcription subunit 8-A (268 aa).

Coiled-coil stretches lie at residues 1-26 (MQRE…KNSL) and 117-160 (VEEL…EERE). The interval 190–268 (GLSNRRPPGQ…KSASMHPYQR (79 aa)) is disordered. The span at 223–246 (VPMSLQSNQQQQHMAGVSMSQGNQ) shows a compositional bias: polar residues.

This sequence belongs to the Mediator complex subunit 8 family. In terms of assembly, component of the Mediator complex. May be part of a multisubunit E3 ubiquitin-protein ligase complex.

It localises to the nucleus. It functions in the pathway protein modification; protein ubiquitination. Functionally, component of the Mediator complex, a coactivator involved in the regulated transcription of nearly all RNA polymerase II-dependent genes. Mediator functions as a bridge to convey information from gene-specific regulatory proteins to the basal RNA polymerase II transcription machinery. Mediator is recruited to promoters by direct interactions with regulatory proteins and serves as a scaffold for the assembly of a functional preinitiation complex with RNA polymerase II and the general transcription factors. May play a role as a target recruitment subunit in E3 ubiquitin-protein ligase complexes and thus in ubiquitination and subsequent proteasomal degradation of target proteins. This chain is Mediator of RNA polymerase II transcription subunit 8-A (med8-a), found in Xenopus laevis (African clawed frog).